A 234-amino-acid polypeptide reads, in one-letter code: MLQFKLVLLGDSSVGKSSIVHRFVKDTFDELRESTIGAAFLSQSITIHPNDGNETKDVVIKFEIWDTAGQERYKSLAPMYYRNANAALVVYDITQEDSLQKARNWVDELKNKVGDDDLVIYLLGNKVDLCQETPSTETSPDSNEGGDEEQKVRAISTEEAKQYAQEQGLLFREVSAKTGEGVKEIFQDIGEKLYDLKKDEILSKQNRQIGGGNNGQVDINLQRPSTNDPTSCCS.

GTP is bound by residues 10-17 (GDSSVGKS), 66-70 (DTAGQ), and 111-114 (NKVG). Disordered stretches follow at residues 131 to 151 (QETPSTETSPDSNEGGDEEQK) and 206 to 234 (NRQIGGGNNGQVDINLQRPSTNDPTSCCS). The span at 132–142 (ETPSTETSPDS) shows a compositional bias: polar residues. Residues S139 and S142 each carry the phosphoserine modification. K151 is covalently cross-linked (Glycyl lysine isopeptide (Lys-Gly) (interchain with G-Cter in ubiquitin)). Residues 217–234 (VDINLQRPSTNDPTSCCS) are compositionally biased toward polar residues. S-geranylgeranyl cysteine attachment occurs at residues C232 and C233.

The protein belongs to the small GTPase superfamily. Rab family. As to quaternary structure, interacts with ROY1, YIF1, YIP3, YIP4 and YIP5.

The protein resides in the cell membrane. It localises to the endoplasmic reticulum. Functionally, required for transport in the endocytic pathway and for correct sorting of the vacuolar hydrolases suggesting a possible intersection of the endocytic with the vacuolar sorting pathway. May be involved in recruiting the MON1-CCZ1 complex to membranes enriched in phosphatidylinositol 3-phosphate (PtdIns[3]P) or other charged lipids, leading to recruitment of YPT7. The sequence is that of GTP-binding protein YPT52 (YPT52) from Saccharomyces cerevisiae (strain ATCC 204508 / S288c) (Baker's yeast).